The following is a 307-amino-acid chain: Aspartate carbamoyltransferase catalytic subunit (307 aa).

Residues Arg55 and Thr56 each contribute to the carbamoyl phosphate site. Residue Lys85 coordinates L-aspartate. Residues Arg106, His134, and Gln137 each contribute to the carbamoyl phosphate site. L-aspartate contacts are provided by Arg167 and Arg228. 2 residues coordinate carbamoyl phosphate: Leu266 and Pro267.

The protein belongs to the aspartate/ornithine carbamoyltransferase superfamily. ATCase family. In terms of assembly, heterododecamer (2C3:3R2) of six catalytic PyrB chains organized as two trimers (C3), and six regulatory PyrI chains organized as three dimers (R2).

The catalysed reaction is carbamoyl phosphate + L-aspartate = N-carbamoyl-L-aspartate + phosphate + H(+). The protein operates within pyrimidine metabolism; UMP biosynthesis via de novo pathway; (S)-dihydroorotate from bicarbonate: step 2/3. Its function is as follows. Catalyzes the condensation of carbamoyl phosphate and aspartate to form carbamoyl aspartate and inorganic phosphate, the committed step in the de novo pyrimidine nucleotide biosynthesis pathway. In Tolumonas auensis (strain DSM 9187 / NBRC 110442 / TA 4), this protein is Aspartate carbamoyltransferase catalytic subunit.